A 497-amino-acid polypeptide reads, in one-letter code: Probable malate:quinone oxidoreductase (497 aa).

This sequence belongs to the MQO family. The cofactor is FAD.

The enzyme catalyses (S)-malate + a quinone = a quinol + oxaloacetate. It functions in the pathway carbohydrate metabolism; tricarboxylic acid cycle; oxaloacetate from (S)-malate (quinone route): step 1/1. This Prochlorococcus marinus subsp. pastoris (strain CCMP1986 / NIES-2087 / MED4) protein is Probable malate:quinone oxidoreductase.